The following is a 263-amino-acid chain: Lens fiber major intrinsic protein (263 aa).

At 1–12 the chain is on the cytoplasmic side; that stretch reads MWELRSASFWRA. The helical transmembrane segment at 13–30 threads the bilayer; the sequence is IFAEFFATLFYVFFGLGA. Over 31 to 40 the chain is Extracellular; sequence SLRWAPGPLH. A helical membrane pass occupies residues 41–59; it reads VLQVALAFGLALATLVQAV. The Cytoplasmic segment spans residues 60-63; it reads GHIS. The segment at residues 64–76 is an intramembrane region (discontinuously helical); the sequence is GAHVNPAVTFAFL. The NPA 1 motif lies at 68–70; sequence NPA. Residues 77-85 are Cytoplasmic-facing; the sequence is VGSQMSLLR. The helical transmembrane segment at 86–106 threads the bilayer; it reads AICYVVAQLLGAVAGAAVLYS. Topologically, residues 107–126 are extracellular; it reads VTPPAVRGNLALNTLHPGVS. A helical transmembrane segment spans residues 127-147; it reads VGQATIVEIFLTLQFVLCIFA. Over 148 to 157 the chain is Cytoplasmic; the sequence is TYDERRNGRL. A helical membrane pass occupies residues 158-175; it reads GSVALAVGFSLTLGHLFG. Residues 176-177 are Extracellular-facing; that stretch reads MY. The discontinuously helical intramembrane region spans 178–193; that stretch reads YTGAGMNPARSFAPAI. The NPA 2 signature appears at 184 to 186; sequence NPA. Topologically, residues 194–200 are extracellular; that stretch reads LTRNFTN. The helical transmembrane segment at 201-218 threads the bilayer; that stretch reads HWVYWVGPVIGAGLGSLL. At 219–263 the chain is on the cytoplasmic side; the sequence is YDFLLFPRLKSVSERLSILKGTRPSESNGQPEVTGEPVELKTQAL. Positions 227–237 are interaction with CALM; it reads LKSVSERLSIL. 3 positions are modified to phosphoserine: S235, S243, and S245. Residues 240–263 are disordered; it reads TRPSESNGQPEVTGEPVELKTQAL.

The protein belongs to the MIP/aquaporin (TC 1.A.8) family. In terms of assembly, homotetramer; each monomer provides an independent water pore. Two homotetramers on opposing membranes can dimerize, forming a cell-cell junction. Interacts with CALM; the calcium-calmodulin/CALM complex interacts with the cytoplasmic domains of two aquaporins, leading to channel closure. Interacts with BFSP1 (via C-terminus); prevents calcium-dependent inhibition of the water channel activity. In terms of processing, subject to partial proteolytic cleavage in the eye lens core. Partial proteolysis promotes interactions between tetramers from adjoining membranes. Post-translationally, fatty acylated at Met-1 and Lys-238. The acyl modifications, in decreasing order of ion abundance, are: oleoyl (C18:1) &gt; palmitoyl (C16:0) &gt; stearoyl (C18:0) &gt; eicosenoyl (C20:1) &gt; dihomo-gamma-linolenoyl (C20:3) &gt; palmitoleoyl (C16:1) &gt; eicosadienoyl (C20:2). Detected in eye lens (at protein level).

It is found in the cell membrane. The protein localises to the cell junction. The catalysed reaction is H2O(in) = H2O(out). Its activity is regulated as follows. The water channel activity is inhibited by calcium through calmodulin/CALM. Functionally, aquaporins form homotetrameric transmembrane channels, with each monomer independently mediating water transport across the plasma membrane along its osmotic gradient. Specifically expressed in lens fiber cells, this aquaporin is crucial for maintaining lens water homeostasis and transparency. Beyond water permeability, it also acts as a cell-to-cell adhesion molecule, forming thin junctions between lens fiber cells that are essential for maintaining the ordered structure and transparency of the lens. This chain is Lens fiber major intrinsic protein, found in Ovis aries (Sheep).